A 355-amino-acid chain; its full sequence is UDP-3-O-acylglucosamine N-acyltransferase (355 aa).

The active-site Proton acceptor is the His248.

It belongs to the transferase hexapeptide repeat family. LpxD subfamily. As to quaternary structure, homotrimer.

It carries out the reaction a UDP-3-O-[(3R)-3-hydroxyacyl]-alpha-D-glucosamine + a (3R)-hydroxyacyl-[ACP] = a UDP-2-N,3-O-bis[(3R)-3-hydroxyacyl]-alpha-D-glucosamine + holo-[ACP] + H(+). The protein operates within bacterial outer membrane biogenesis; LPS lipid A biosynthesis. Functionally, catalyzes the N-acylation of UDP-3-O-acylglucosamine using 3-hydroxyacyl-ACP as the acyl donor. Is involved in the biosynthesis of lipid A, a phosphorylated glycolipid that anchors the lipopolysaccharide to the outer membrane of the cell. The protein is UDP-3-O-acylglucosamine N-acyltransferase of Synechococcus elongatus (strain ATCC 33912 / PCC 7942 / FACHB-805) (Anacystis nidulans R2).